Consider the following 265-residue polypeptide: Undecaprenyl-diphosphatase (265 aa).

A run of 7 helical transmembrane segments spans residues 42–62 (EAIPISIWLHLGTLLAAIVYF), 90–110 (ISFLLISTALTGIVGLPLLLF), 115–135 (VEISGGSATAVIGIMLIVTGI), 160–182 (VAQGFAAIPGISRSGITMSALLL), 195–215 (FLMSIPAVLVAEIGVGLMGMV), 222–242 (IVGLFFAFAFGLVTIDLFLKV), and 245–265 (KVDFSYFCIGLGVLSVLTMFL).

It belongs to the UppP family.

It is found in the cell membrane. It catalyses the reaction di-trans,octa-cis-undecaprenyl diphosphate + H2O = di-trans,octa-cis-undecaprenyl phosphate + phosphate + H(+). Functionally, catalyzes the dephosphorylation of undecaprenyl diphosphate (UPP). In Methanococcoides burtonii (strain DSM 6242 / NBRC 107633 / OCM 468 / ACE-M), this protein is Undecaprenyl-diphosphatase.